Reading from the N-terminus, the 233-residue chain is 3-dehydroquinate dehydratase (233 aa).

Residues 39–41 (EIR) and arginine 73 contribute to the 3-dehydroquinate site. Catalysis depends on histidine 132, which acts as the Proton donor/acceptor. Lysine 159 (schiff-base intermediate with substrate) is an active-site residue. Residues arginine 196 and glutamine 219 each coordinate 3-dehydroquinate.

This sequence belongs to the type-I 3-dehydroquinase family. Homodimer.

The enzyme catalyses 3-dehydroquinate = 3-dehydroshikimate + H2O. It participates in metabolic intermediate biosynthesis; chorismate biosynthesis; chorismate from D-erythrose 4-phosphate and phosphoenolpyruvate: step 3/7. Involved in the third step of the chorismate pathway, which leads to the biosynthesis of aromatic amino acids. Catalyzes the cis-dehydration of 3-dehydroquinate (DHQ) and introduces the first double bond of the aromatic ring to yield 3-dehydroshikimate. This chain is 3-dehydroquinate dehydratase, found in Methanococcoides burtonii (strain DSM 6242 / NBRC 107633 / OCM 468 / ACE-M).